A 564-amino-acid chain; its full sequence is Sulfite reductase [NADPH] hemoprotein beta-component 1 (564 aa).

Positions 426, 432, 471, and 475 each coordinate [4Fe-4S] cluster. Residue C475 participates in siroheme binding.

It belongs to the nitrite and sulfite reductase 4Fe-4S domain family. As to quaternary structure, alpha(8)-beta(8). The alpha component is a flavoprotein, the beta component is a hemoprotein. It depends on siroheme as a cofactor. [4Fe-4S] cluster serves as cofactor.

The enzyme catalyses hydrogen sulfide + 3 NADP(+) + 3 H2O = sulfite + 3 NADPH + 4 H(+). It participates in sulfur metabolism; hydrogen sulfide biosynthesis; hydrogen sulfide from sulfite (NADPH route): step 1/1. In terms of biological role, component of the sulfite reductase complex that catalyzes the 6-electron reduction of sulfite to sulfide. This is one of several activities required for the biosynthesis of L-cysteine from sulfate. This is Sulfite reductase [NADPH] hemoprotein beta-component 1 from Pectobacterium carotovorum subsp. carotovorum (strain PC1).